The primary structure comprises 162 residues: NADH-quinone oxidoreductase subunit I (162 aa).

4Fe-4S ferredoxin-type domains are found at residues 53 to 83 (LRRY…IESD) and 93 to 122 (TRYD…ETHI). Positions 63, 66, 69, 73, 102, 105, 108, and 112 each coordinate [4Fe-4S] cluster.

Belongs to the complex I 23 kDa subunit family. NDH-1 is composed of 14 different subunits. Subunits NuoA, H, J, K, L, M, N constitute the membrane sector of the complex. [4Fe-4S] cluster serves as cofactor.

It is found in the cell inner membrane. It carries out the reaction a quinone + NADH + 5 H(+)(in) = a quinol + NAD(+) + 4 H(+)(out). In terms of biological role, NDH-1 shuttles electrons from NADH, via FMN and iron-sulfur (Fe-S) centers, to quinones in the respiratory chain. The immediate electron acceptor for the enzyme in this species is believed to be ubiquinone. Couples the redox reaction to proton translocation (for every two electrons transferred, four hydrogen ions are translocated across the cytoplasmic membrane), and thus conserves the redox energy in a proton gradient. In Bordetella avium (strain 197N), this protein is NADH-quinone oxidoreductase subunit I.